The primary structure comprises 498 residues: O-methyltransferase OME1 (498 aa).

The segment covering 1 to 19 has biased composition (polar residues); that stretch reads MSTMALHRTASTKSDTTMA. 2 disordered regions span residues 1 to 23 and 42 to 83; these read MSTM…CPNG and HRAE…QPEY. The segment covering 50-65 has biased composition (low complexity); sequence SSTSSVSTTPTSPSFS. Residue Asp-358 coordinates S-adenosyl-L-methionine. Catalysis depends on His-406, which acts as the Proton acceptor.

The protein belongs to the class I-like SAM-binding methyltransferase superfamily. Cation-independent O-methyltransferase family.

It participates in secondary metabolite biosynthesis. In terms of biological role, O-methyltransferase; part of the gene cluster that mediates the biosynthesis of a tyrosine-derived cytochalasan acting as a fungal signal recognized by resistant rice plants and leads to avirulence in Pi33 resistant rice cultivars. The first step in the pathway is catalyzed by the hybrid PKS-NRPS ACE1, assisted by the enoyl reductase RAP1, that are responsible for fusion of the tyrosine precursor and the polyketide backbone. The polyketide synthase module (PKS) of ACE1 is responsible for the synthesis of the polyketide backbone and the downstream nonribosomal peptide synthetase (NRPS) amidates the carboxyl end of the polyketide with the tyrosine precursor. Because ACE1 lacks a designated enoylreductase (ER) domain, the required activity is provided the enoyl reductase RAP1. Reduction by the hydrolyase ORFZ, followed by dehydration and intra-molecular Diels-Alder cyclization by the Diels-Alderase ORF3 then yield the required isoindolone-fused macrocycle. A number of oxidative steps catalyzed by the tailoring enzymes identified within the cluster, including cytochrome P450 monooxygenases CYP1 to CYP4, the FAD-linked oxidoreductase OXR2 and the short-chain dehydrogenase/reductase OXR1, are further required to afford the final cytochalasans that confer avirulence and which have still to be identified. The monooxygenase CYP1 has been shown to be a site-selective C-18 hydroxylase whereas the function of CYP3 is the site-selective epoxidation of the C-6/C-7 olefin that is present in some intermediate compounds. Finally, SYN2 and RAP2 are not required for avirulence in Pi33 resistant rice cultivars. The chain is O-methyltransferase OME1 from Pyricularia oryzae (strain 70-15 / ATCC MYA-4617 / FGSC 8958) (Rice blast fungus).